The following is a 126-amino-acid chain: Fluoride-specific ion channel FluC 2 (126 aa).

The next 4 helical transmembrane spans lie at 11–31 (VLLIGLGGFLGAVCRFLICEH), 36–56 (LGILSVNVLGSFMLGMIMYDA), 69–89 (AFGTGFIGAFTTFSTFAVQSF), and 93–113 (FLPALGNISANLFLTLTGVFF). 2 residues coordinate Na(+): G76 and T79.

Belongs to the fluoride channel Fluc/FEX (TC 1.A.43) family.

Its subcellular location is the cell membrane. The catalysed reaction is fluoride(in) = fluoride(out). Its activity is regulated as follows. Na(+) is not transported, but it plays an essential structural role and its presence is essential for fluoride channel function. Functionally, fluoride-specific ion channel. Important for reducing fluoride concentration in the cell, thus reducing its toxicity. This is Fluoride-specific ion channel FluC 2 from Methanosarcina mazei (strain ATCC BAA-159 / DSM 3647 / Goe1 / Go1 / JCM 11833 / OCM 88) (Methanosarcina frisia).